The sequence spans 318 residues: Inner membrane protein YbhN (318 aa).

The Periplasmic segment spans residues 1-13 (MSKSHPRWRLAKK). A helical transmembrane segment spans residues 14–34 (ILTWLFFIAVIVLLVVYAKKV). Residues 35–50 (DWEEVWKVIRDYNRVA) lie on the Cytoplasmic side of the membrane. Residues 51–71 (LLSAVGLVVVSYLIYGCYDLL) traverse the membrane as a helical segment. Over 72-85 (ARFYCGHKLAKRQV) the chain is Periplasmic. Residues 86–106 (MLVSFICYAFNLTLSTWVGGI) traverse the membrane as a helical segment. Residues 107 to 125 (GMRYRLYSRLGLPGSTITR) lie on the Cytoplasmic side of the membrane. A helical membrane pass occupies residues 126–146 (IFSLSITTNWLGYILLAGIIF). At 147–165 (TAGVVELPDHWYVDQTTLR) the chain is on the periplasmic side. Residues 166–186 (ILGIGLLMIIAVYLWFCAFAK) form a helical membrane-spanning segment. At 187–205 (HRHMTIKGQKLVLPSWKFA) the chain is on the cytoplasmic side. The helical transmembrane segment at 206–226 (LAQMLISSVNWMVMGAIIWLL) threads the bilayer. At 227–233 (LGQSVNY) the chain is on the periplasmic side. The next 2 membrane-spanning stretches (helical) occupy residues 234–254 (FFVL…HIPA) and 255–275 (GIGV…TSKG). At 276–277 (TI) the chain is on the periplasmic side. A helical membrane pass occupies residues 278–298 (IAALLAYRVLYYFIPLLLALI). Residues 299–318 (CYLLLESQAKKLRAKNEAAM) are Cytoplasmic-facing.

It to Synechocystis PCC 6803 slr0712.

The protein localises to the cell inner membrane. This is Inner membrane protein YbhN (ybhN) from Escherichia coli (strain K12).